The chain runs to 416 residues: Gamma-glutamyl phosphate reductase (416 aa).

The protein belongs to the gamma-glutamyl phosphate reductase family.

The protein localises to the cytoplasm. The enzyme catalyses L-glutamate 5-semialdehyde + phosphate + NADP(+) = L-glutamyl 5-phosphate + NADPH + H(+). Its pathway is amino-acid biosynthesis; L-proline biosynthesis; L-glutamate 5-semialdehyde from L-glutamate: step 2/2. Its function is as follows. Catalyzes the NADPH-dependent reduction of L-glutamate 5-phosphate into L-glutamate 5-semialdehyde and phosphate. The product spontaneously undergoes cyclization to form 1-pyrroline-5-carboxylate. This Streptococcus pyogenes serotype M1 protein is Gamma-glutamyl phosphate reductase.